The chain runs to 172 residues: Shikimate kinase (172 aa).

12-17 (GSGKTS) contacts ATP. Thr16 is a Mg(2+) binding site. Residues Asp34, Arg58, and Gly81 each coordinate substrate. Residue Arg122 coordinates ATP. Arg139 is a substrate binding site.

Belongs to the shikimate kinase family. Monomer. The cofactor is Mg(2+).

The protein resides in the cytoplasm. The catalysed reaction is shikimate + ATP = 3-phosphoshikimate + ADP + H(+). Its pathway is metabolic intermediate biosynthesis; chorismate biosynthesis; chorismate from D-erythrose 4-phosphate and phosphoenolpyruvate: step 5/7. Functionally, catalyzes the specific phosphorylation of the 3-hydroxyl group of shikimic acid using ATP as a cosubstrate. This is Shikimate kinase from Dictyoglomus turgidum (strain DSM 6724 / Z-1310).